The following is a 308-amino-acid chain: Acyltransferase drtE (308 aa).

An AB hydrolase-1 domain is found at 35–159 (PALVMNPGYN…AAEAKDNFSR (125 aa)).

It belongs to the polyketide transferase af380 family.

Its pathway is secondary metabolite biosynthesis; terpenoid biosynthesis. Functionally, acyltransferase; part of the gene cluster that mediates the biosynthesis of various drimane-type sesquiterpene esters, compounds that exhibit diverse biological activities and are widely present in eukaryotes. The pathway begins with the synthesis of the backbone drimenol by the terpene cyclase drtB using farnesyl pyrophosphate (FPP) as substrate. The cytochrome P450 monooxygenase drtD is then responsible for the hydroxylations at C-6, C-9 and C-12, as well as the oxidation of hydroxyl groups at C-6 and C-11 to a ketone and an aldehyde, respectively. Then, the biosynthesis can go in two directions, either the hydroxylated drimenol is further hydroxylated at C-2 and C-3 by an enzyme(s) not associated with the drt cluster, or the FAD-binding oxidoreductase drtC further oxidizes C-11 or C-12 to form the butyrolactone ring. DrtB, drtD and drtC are solely responsible for the formation of the different drimane structures observed during drimane sesquiterpenes biosynthesis. The polyketide synthase drtA synthesizes different lengths (C6 and C8) of PKS chains, which are then oxidized to varying degrees by the short-chain dehydrogenase drtF. Finally, these PKS chains are transferred onto drimane sesquiterpenes by the acyltransferase drtE, forming the sesquiterpene esters. In addition to the different fatty acyl-CoA chains produced by drtA, drtE is also able to use cinnamoyl-CoA as a substrate. The polypeptide is Acyltransferase drtE (Aspergillus calidoustus).